Here is a 229-residue protein sequence, read N- to C-terminus: Ribonuclease 3 (229 aa).

Residues 3–125 (VNALQEKLGY…LIGGIFLDSN (123 aa)) enclose the RNase III domain. Glutamate 38 serves as a coordination point for Mg(2+). Residue aspartate 42 is part of the active site. 2 residues coordinate Mg(2+): asparagine 111 and glutamate 114. Glutamate 114 is a catalytic residue. The 71-residue stretch at 155 to 225 (DPKTRLQEYM…AAKVLEALEH (71 aa)) folds into the DRBM domain.

It belongs to the ribonuclease III family. As to quaternary structure, homodimer. The cofactor is Mg(2+).

It localises to the cytoplasm. It carries out the reaction Endonucleolytic cleavage to 5'-phosphomonoester.. Digests double-stranded RNA. Involved in the processing of primary rRNA transcript to yield the immediate precursors to the large and small rRNAs (23S and 16S). Processes some mRNAs, and tRNAs when they are encoded in the rRNA operon. Processes pre-crRNA and tracrRNA of type II CRISPR loci if present in the organism. The sequence is that of Ribonuclease 3 from Blochmanniella pennsylvanica (strain BPEN).